A 462-amino-acid chain; its full sequence is Argininosuccinate lyase (462 aa).

The protein belongs to the lyase 1 family. Argininosuccinate lyase subfamily.

The protein localises to the cytoplasm. The catalysed reaction is 2-(N(omega)-L-arginino)succinate = fumarate + L-arginine. The protein operates within amino-acid biosynthesis; L-arginine biosynthesis; L-arginine from L-ornithine and carbamoyl phosphate: step 3/3. The sequence is that of Argininosuccinate lyase from Methylobacterium nodulans (strain LMG 21967 / CNCM I-2342 / ORS 2060).